Here is a 274-residue protein sequence, read N- to C-terminus: Merozoite surface protein 2 (274 aa).

A signal peptide spans 1 to 20; that stretch reads MKVIKTLSIINFFIFVTFNI. 2 N-linked (GlcNAc...) asparagine glycosylation sites follow: N22 and N36. Positions 43-234 are disordered; that stretch reads MAESKPPTGT…SDSQKECTDG (192 aa). The segment at 44–200 is polymorphic region; that stretch reads AESKPPTGTG…EQTESPELQS (157 aa). Repeat copies occupy residues 53–62 and 63–72. Residues 53-72 are 2 X 10 AA tandem repeats of G-A-S-G-S-A-G-S-G-[AD]; that stretch reads GASGSAGSGAGASGSAGSGD. A compositionally biased stretch (gly residues) spans 53 to 72; sequence GASGSAGSGAGASGSAGSGD. The segment covering 91 to 121 has biased composition (low complexity); that stretch reads SSSTPATTTTTTTTTTTTTTNDAEASTSTSS. Polar residues-rich tracts occupy residues 122–131, 140–167, and 174–202; these read ENPNHNNAET, QKSN…NVPP, and KSPT…QSAP. A glycan (N-linked (GlcNAc...) asparagine) is linked at N151. N-linked (GlcNAc...) asparagine glycosylation occurs at N223. A disulfide bridge links C231 with C239. The N-linked (GlcNAc...) asparagine glycan is linked to N248. N248 is lipidated: GPI-anchor amidated asparagine. A propeptide spans 249 to 274 (removed in mature form); it reads SSNIASINKFVVLISAKLVLSFAIFI.

It localises to the cell membrane. In terms of biological role, may play a role in the merozoite attachment to the erythrocyte. In Plasmodium falciparum (isolate kf1916), this protein is Merozoite surface protein 2.